A 493-amino-acid chain; its full sequence is Cytochrome P450 2E1 (493 aa).

Position 298-303 (298-303 (FAGTET)) interacts with substrate. C437 is a binding site for heme.

The protein belongs to the cytochrome P450 family. As to quaternary structure, interacts with chaperones HSP70 and HSP90; this interaction is required for initial targeting to mitochondria. The cofactor is heme.

The protein resides in the endoplasmic reticulum membrane. It is found in the microsome membrane. It localises to the mitochondrion inner membrane. It carries out the reaction an organic molecule + reduced [NADPH--hemoprotein reductase] + O2 = an alcohol + oxidized [NADPH--hemoprotein reductase] + H2O + H(+). The enzyme catalyses (5Z,8Z,11Z)-eicosatrienoate + reduced [NADPH--hemoprotein reductase] + O2 = 19-hydroxy-(5Z,8Z,11Z)-eicosatrienoate + oxidized [NADPH--hemoprotein reductase] + H2O + H(+). It catalyses the reaction (5Z,8Z,11Z,14Z,17Z)-eicosapentaenoate + reduced [NADPH--hemoprotein reductase] + O2 = 19-hydroxy-(5Z,8Z,11Z,14Z,17Z)-eicosapentaenoate + oxidized [NADPH--hemoprotein reductase] + H2O + H(+). The catalysed reaction is (4Z,7Z,10Z,13Z,16Z,19Z)-docosahexaenoate + reduced [NADPH--hemoprotein reductase] + O2 = 21-hydroxy-(4Z,7Z,10Z,13Z,16Z,19Z)-docosahexaenoate + oxidized [NADPH--hemoprotein reductase] + H2O + H(+). It carries out the reaction dodecanoate + reduced [NADPH--hemoprotein reductase] + O2 = 11-hydroxydodecanoate + oxidized [NADPH--hemoprotein reductase] + H2O + H(+). The enzyme catalyses tetradecanoate + reduced [NADPH--hemoprotein reductase] + O2 = 13-hydroxytetradecanoate + oxidized [NADPH--hemoprotein reductase] + H2O + H(+). It catalyses the reaction 4-nitrophenol + NADPH + O2 + H(+) = 4-nitrocatechol + NADP(+) + H2O. It participates in lipid metabolism; fatty acid metabolism. With respect to regulation, the omega-1 hydroxylase activity is stimulated by cytochrome b5. Functionally, a cytochrome P450 monooxygenase involved in the metabolism of fatty acids. Mechanistically, uses molecular oxygen inserting one oxygen atom into a substrate, and reducing the second into a water molecule, with two electrons provided by NADPH via cytochrome P450 reductase (NADPH--hemoprotein reductase). Catalyzes the hydroxylation of carbon-hydrogen bonds. Hydroxylates fatty acids specifically at the omega-1 position displaying the highest catalytic activity for saturated fatty acids. May be involved in the oxidative metabolism of xenobiotics. The polypeptide is Cytochrome P450 2E1 (CYP2E1) (Mesocricetus auratus (Golden hamster)).